A 53-amino-acid chain; its full sequence is UPF0391 membrane protein Meso_3392 (53 aa).

2 consecutive transmembrane segments (helical) span residues 4-24 (WILI…HSLA) and 33-53 (ILIA…IAIA).

This sequence belongs to the UPF0391 family.

Its subcellular location is the cell membrane. This chain is UPF0391 membrane protein Meso_3392, found in Chelativorans sp. (strain BNC1).